We begin with the raw amino-acid sequence, 318 residues long: MRSPLVLLDGASMWFRSFFGVPSSITAPDGRPVNAVRGFIDSMAVVITQQRPNRLAVCLDLDWRPQFRVDLIPSYKAHRVAEPEPNGQPDVEEVPDELTPQVDMIMELLDAFGIAMAGAPGFEADDVLGTLATRERRDPVIVVSGDRDLLQVVADDPVPVRVLYLGRGLAKATLFGPAEVAERYGLPAHRAGAAYAELALLRGDPSDGLPGVPGVGEKTAATLLARHGSLDQIMAAADDRKTTMAKGLRTKLLAASAYIKAADRVVRVATDAPVTLSTPTDRFPLVAADPERTAELATRFGVESSIARLQKALDTLPG.

In terms of domain architecture, 5'-3' exonuclease spans 194-278 (AYAELALLRG…ATDAPVTLST (85 aa)).

In terms of biological role, 5'-3' exonuclease acting preferentially on double-stranded DNA. The polypeptide is 5'-3' exonuclease (Mycobacterium tuberculosis (strain ATCC 25618 / H37Rv)).